The chain runs to 56 residues: Preprotein translocase subunit SecG (56 aa).

Over 1–30 (MARKDKKTLPASGAGIVRYFNDDTAGVKLS) the chain is Cytoplasmic. The helical transmembrane segment at 31 to 52 (PKQVVIGTIIVALICIALRFTT) threads the bilayer. Residues 53 to 56 (SVGY) are Extracellular-facing.

Belongs to the SEC61-beta family. As to quaternary structure, component of the protein translocase complex. Heterotrimer consisting of alpha (SecY), beta (SecG) and gamma (SecE) subunits. Can form oligomers of the heterotrimer.

The protein resides in the cell membrane. Involved in protein export. The function of the beta subunit is unknown, but it may be involved in stabilization of the trimeric complex. In Methanosphaera stadtmanae (strain ATCC 43021 / DSM 3091 / JCM 11832 / MCB-3), this protein is Preprotein translocase subunit SecG.